A 640-amino-acid chain; its full sequence is DNA topoisomerase 3 (640 aa).

A Toprim domain is found at 21-175 (RVLCVAEKNS…WRAQFSHLEP (155 aa)). Mg(2+) is bound by residues Glu-27, Asp-137, and Asp-139. The region spanning 189-618 (DMKLVAAVEC…QLLPLYKEAF (430 aa)) is the Topo IA-type catalytic domain. The O-(5'-phospho-DNA)-tyrosine intermediate role is filled by Tyr-354.

Belongs to the type IA topoisomerase family. The cofactor is Mg(2+).

It catalyses the reaction ATP-independent breakage of single-stranded DNA, followed by passage and rejoining.. Functionally, introduces a single-strand break via transesterification at a target site in duplex DNA. Releases the supercoiling and torsional tension of DNA introduced during the DNA replication and transcription by transiently cleaving and rejoining one strand of the DNA duplex. The scissile phosphodiester is attacked by the catalytic tyrosine of the enzyme, resulting in the formation of a DNA-(5'-phosphotyrosyl)-enzyme intermediate and the expulsion of a 3'-OH DNA strand. The protein is DNA topoisomerase 3 (TOP3) of Candidozyma auris (Yeast).